We begin with the raw amino-acid sequence, 1163 residues long: E3 ubiquitin-protein ligase TRIM33 (1163 aa).

Residues 1–119 form a disordered region; it reads MEVEASGTED…ASTSSSSSTP (119 aa). Residues 27–38 show a composition bias toward basic and acidic residues; that stretch reads TETKEAADEAKS. Low complexity predominate over residues 45 to 54; it reads TPTTSSDSSS. Pro residues predominate over residues 72 to 87; sequence DPPPPPPPPPPPPPST. The span at 88–99 shows a compositional bias: low complexity; that stretch reads PADSTAAAASPA. The RING-type zinc finger occupies 129 to 188; that stretch reads CAVCKQSLQNRDCEPKLLPCLHSFCLKCIPQPDRKITMPVQGPHGQDTRIVNVMRCTVCH. The B box-type 1; atypical zinc-finger motif lies at 215-268; that stretch reads NSTQVCTSCEDNASAIGFCVECGEWLCKTCIEAHQRVKFTKDHKIRKKEEVSPE. Zn(2+) is bound by residues C220, C223, C244, H257, C280, H283, C303, and H308. Residues 275 to 316 form a B box-type 2 zinc finger; that stretch reads QRPVFCPVHKQEALKLFCETCDTLTCRDCQLLEHKEHRYQFL. A coiled-coil region spans residues 345-369; sequence ASEVQKRLKEVAETHKKVEHEIKIA. The span at 524 to 533 shows a compositional bias: low complexity; the sequence is MQQAAIAQKH. Disordered regions lie at residues 524–555, 575–599, 656–706, 753–848, and 867–918; these read MQQA…QQQQ, QIQQ…QMIQ, LQRQ…VITP, TVGP…PLPI, and NVKS…KEDD. Positions 534 to 548 are enriched in basic residues; the sequence is QQQHQHHQQQQHQHQ. The segment covering 580–590 has biased composition (polar residues); the sequence is MRIASQMSQHP. Low complexity-rich tracts occupy residues 678–691 and 753–797; these read SAAN…ASMA and TVGP…SGTT. Over residues 821-830 the composition is skewed to basic and acidic residues; that stretch reads KTERTKDGRR. Positions 870–889 are enriched in polar residues; the sequence is SEPQSDNLSSCTNPNSRATL. The PHD-type zinc-finger motif lies at 921–968; the sequence is EDWCAVCQNGGELLCCDHCPKVFHITCHIPTLKSSPSGDWMCTFCRNL. The region spanning 991-1114 is the Bromo domain; sequence AMSPEEQRRC…LYFEERLLEI (124 aa). Positions 1128–1147 are disordered; that stretch reads TQIEAEKEDSDDSDDDIIQP. The span at 1133–1144 shows a compositional bias: acidic residues; sequence EKEDSDDSDDDI.

The protein resides in the nucleus. It carries out the reaction S-ubiquitinyl-[E2 ubiquitin-conjugating enzyme]-L-cysteine + [acceptor protein]-L-lysine = [E2 ubiquitin-conjugating enzyme]-L-cysteine + N(6)-ubiquitinyl-[acceptor protein]-L-lysine.. It participates in protein modification; protein ubiquitination. Functionally, may act as an E3 ubiquitin-protein ligase and a transcriptional repressor. Involved in the regulation of embryonic and adult hematopoiesis. Required for normal development and survival of both committed erythroid progenitor cells and posterior mesenchymal cells. This Danio rerio (Zebrafish) protein is E3 ubiquitin-protein ligase TRIM33 (trim33).